We begin with the raw amino-acid sequence, 282 residues long: Acetyl-coenzyme A carboxylase carboxyl transferase subunit beta 1 (282 aa).

The CoA carboxyltransferase N-terminal domain occupies 23–282 (LMTKCPECRH…MHTKGGVQHV (260 aa)). The Zn(2+) site is built by Cys27, Cys30, Cys46, and Cys49. Residues 27–49 (CPECRHILLTKELEKNHKVCTKC) form a C4-type zinc finger.

It belongs to the AccD/PCCB family. Acetyl-CoA carboxylase is a heterohexamer composed of biotin carboxyl carrier protein (AccB), biotin carboxylase (AccC) and two subunits each of ACCase subunit alpha (AccA) and ACCase subunit beta (AccD). The cofactor is Zn(2+).

The protein resides in the cytoplasm. The catalysed reaction is N(6)-carboxybiotinyl-L-lysyl-[protein] + acetyl-CoA = N(6)-biotinyl-L-lysyl-[protein] + malonyl-CoA. The protein operates within lipid metabolism; malonyl-CoA biosynthesis; malonyl-CoA from acetyl-CoA: step 1/1. Functionally, component of the acetyl coenzyme A carboxylase (ACC) complex. Biotin carboxylase (BC) catalyzes the carboxylation of biotin on its carrier protein (BCCP) and then the CO(2) group is transferred by the transcarboxylase to acetyl-CoA to form malonyl-CoA. This chain is Acetyl-coenzyme A carboxylase carboxyl transferase subunit beta 1, found in Lysinibacillus sphaericus (strain C3-41).